A 641-amino-acid polypeptide reads, in one-letter code: Threonine--tRNA ligase (641 aa).

A TGS domain is found at 1-61 (MIKINLLNHQ…TQDGDLEILA (61 aa)). Positions 240–538 (DHKRLNKKLD…LIEENKGVFP (299 aa)) are catalytic. Positions 334, 385, and 515 each coordinate Zn(2+).

It belongs to the class-II aminoacyl-tRNA synthetase family. In terms of assembly, homodimer. Requires Zn(2+) as cofactor.

The protein resides in the cytoplasm. It carries out the reaction tRNA(Thr) + L-threonine + ATP = L-threonyl-tRNA(Thr) + AMP + diphosphate + H(+). Catalyzes the attachment of threonine to tRNA(Thr) in a two-step reaction: L-threonine is first activated by ATP to form Thr-AMP and then transferred to the acceptor end of tRNA(Thr). Also edits incorrectly charged L-seryl-tRNA(Thr). In Phytoplasma australiense, this protein is Threonine--tRNA ligase.